The chain runs to 100 residues: Urease subunit gamma (100 aa).

Belongs to the urease gamma subunit family. As to quaternary structure, heterotrimer of UreA (gamma), UreB (beta) and UreC (alpha) subunits. Three heterotrimers associate to form the active enzyme.

The protein resides in the cytoplasm. It carries out the reaction urea + 2 H2O + H(+) = hydrogencarbonate + 2 NH4(+). It functions in the pathway nitrogen metabolism; urea degradation; CO(2) and NH(3) from urea (urease route): step 1/1. The sequence is that of Urease subunit gamma from Actinobacillus pleuropneumoniae serotype 5b (strain L20).